We begin with the raw amino-acid sequence, 157 residues long: MQLTVKALQGRECNLQVPEDEQVSTLKQLVSEKLNVPVRQQRLLFKGKALADGKRLSDYSIGPNSKLNLVVKPLEKVLLAEGTARRLADSPPPPVWHLISKVLARHFSAADASRVLEQLQRDYERSLSRLTLDDIERLASRFLHPEGTEAMEKGLSK.

One can recognise a Ubiquitin-like domain in the interval 1 to 76 (MQLTVKALQG…LNLVVKPLEK (76 aa)). A Glycyl lysine isopeptide (Lys-Gly) (interchain with G-Cter in ubiquitin) cross-link involves residue lysine 48. Residue serine 90 is modified to Phosphoserine. A required and sufficient for interaction with BAG6 region spans residues 96–138 (WHLISKVLARHFSAADASRVLEQLQRDYERSLSRLTLDDIERL).

As to quaternary structure, component of the BAG6/BAT3 complex, at least composed of BAG6, UBL4A and GET4/TRC35. Interacts with BAG6; the interaction is direct and required for UBL4A protein stability. Interacts with USP13; may be indirect via BAG6. Polyubiquitinated. Ubiquitination by AMFR and deubiquitination by USP13 may regulate the interaction between the BAG6/BAT3 complex and SGTA and therefore may regulate client proteins fate.

The protein resides in the cytoplasm. The protein localises to the cytosol. It localises to the nucleus. As part of a cytosolic protein quality control complex, the BAG6/BAT3 complex, maintains misfolded and hydrophobic patches-containing proteins in a soluble state and participates in their proper delivery to the endoplasmic reticulum or alternatively can promote their sorting to the proteasome where they undergo degradation. The BAG6/BAT3 complex is involved in the post-translational delivery of tail-anchored/type II transmembrane proteins to the endoplasmic reticulum membrane. Recruited to ribosomes, it interacts with the transmembrane region of newly synthesized tail-anchored proteins and together with SGTA and ASNA1 mediates their delivery to the endoplasmic reticulum. Client proteins that cannot be properly delivered to the endoplasmic reticulum are ubiquitinated and sorted to the proteasome. Similarly, the BAG6/BAT3 complex also functions as a sorting platform for proteins of the secretory pathway that are mislocalized to the cytosol either delivering them to the proteasome for degradation or to the endoplasmic reticulum. The BAG6/BAT3 complex also plays a role in the endoplasmic reticulum-associated degradation (ERAD), a quality control mechanism that eliminates unwanted proteins of the endoplasmic reticulum through their retrotranslocation to the cytosol and their targeting to the proteasome. It maintains these retrotranslocated proteins in an unfolded yet soluble state condition in the cytosol to ensure their proper delivery to the proteasome. The chain is Ubiquitin-like protein 4A (UBL4A) from Oryctolagus cuniculus (Rabbit).